Here is a 738-residue protein sequence, read N- to C-terminus: MHRGGDRSTDPSSGPAPGSRGGGDGRFGRGPSRWSSGGGGGGSGSPPHRFSRGGGGGGGDGGGGGGGGGRFHPYRGPSDHSGGGGYRSGGGGEYGEPGSGPRHRYGSGRGDHSDHDNRNNYVKLFIGSVPRTATEDDVRPLFEEHGDVVEVALIKDRKTGEQQGCCFVKYATSEEAERAIRALHNQYTLPGAMGPIQVRYADGERERHGAIEHKLFVASLNKQATAKEIEEIFAPYGHVEDVYIMKDGMRQSRGCGFVKFSSREPALAAMSALSGNYVMRGCEQPLIIRFADPKRPRPGESRGGPAFGGPGFSPRSDAALVIRPTANLDEPRGRHMPPDSWHPSSPRSAPHQFNNFGSDNPMAPKGSTVTSTTDTATFRPQMFSGNGSLSSQTAVPSSSHMGMNPPPMAQGHHLGGQQIPPLQKLPGLPQNFPVQLQNNQLGQPLQGPAQQIGQLQVPQSMGPGSFGQNRLSGQLPVSQPLMQQNASVSAVQVPSAVSNSMQAIPGQQHLPSNVAPQMLQQPVQQMPSQAPQLLLQQQAALQSSYQSSQQAIYQLQQQLQLMQQQQQSNLNHQQPTQGQPVQSSNPGAPNAIIPSNINTIPQQATSPAVPLTCNWTEHTSPEGFKYYYNSITRESKWDKPEEYVLYEQQQQQQQQQKLLLLQQHQQKLAMQQLQSPPQAQTHPAMQPVQQIPQAQQGQQQMQMKQQELNYTQLQTPGAIDPSRIQQGIQSAQERAWKS.

Residues methionine 1–arginine 118 are disordered. Gly residues-rich tracts occupy residues arginine 52–arginine 70 and serine 81–glycine 98. A compositionally biased stretch (basic and acidic residues) spans arginine 109 to arginine 118. RRM domains are found at residues valine 122 to glycine 203 and histidine 213 to proline 293. Disordered stretches follow at residues aspartate 292–leucine 414 and glutamine 566–proline 594. The segment covering serine 301 to glycine 311 has biased composition (gly residues). Residues histidine 342–serine 358 are compositionally biased toward polar residues. Over residues threonine 368 to threonine 377 the composition is skewed to low complexity. Polar residues-rich tracts occupy residues phenylalanine 383–methionine 401 and proline 575–proline 594. Positions valine 609–glutamate 642 constitute a WW domain. Residues methionine 670 to serine 738 are disordered. The span at proline 683–glutamine 706 shows a compositional bias: low complexity. Polar residues predominate over residues arginine 723–glutamine 732.

In terms of assembly, interacts with FY. Binds to SF1, FIK, RPRD1B, Os09g0509000/LOC_Os09g33480 and MADS8. In terms of tissue distribution, mostly expressed in young flowers (panicles) and stems, and also present in young seedlings leaves and roots.

It is found in the nucleus. Plays a major role in the promotion of the transition of the vegetative meristem to reproductive development. Required for RNA-mediated chromatin silencing of a range of loci in the genome. Cotranscriptionally recognizes aberrant RNA and marks it for silencing. Controls alternative cleavage and polyadenylation on pre-mRNAs and antisense RNAs. Regulates flowering time, seed size and cell volume, probably via the modulation of cell size. In Oryza sativa subsp. japonica (Rice), this protein is Flowering time control protein FCA.